The primary structure comprises 326 residues: Putative GTPase CC_2483 (326 aa).

Residues 61-69, aspartate 203, and 238-240 each bind GTP; these read GVPGAGKST and SGL.

This sequence belongs to the SIMIBI class G3E GTPase family. ArgK/MeaB subfamily.

May have GTPase activity. May also bind and hydrolyze ATP. May function as chaperone. This Caulobacter vibrioides (strain ATCC 19089 / CIP 103742 / CB 15) (Caulobacter crescentus) protein is Putative GTPase CC_2483.